The sequence spans 516 residues: MGHRLVVVLLLALLVAGAARAAEQAAGEDGIRGGAGADHQEAAGITGGLSRRSFPAGFVFGTAASAYQVEGMALKDGRGPSIWDAFVKTPGEIANNATADVTVDEYHRYKEDVNIMKSMGFDAYRFSISWSRIFPTGTGKVNWKGVAYYNRLINYMLKIGITPYANLYHYDLPEALEVQYGGLLNRKIVEAFADYAEFCFKTFGDRVKNWMTFNEPRVVAALGYDDGNFAPGRCTKCTAGNSATEPYIVAHHLILSHASAVQRYRHKYQHIQKGKIGILLDFVWYEGLTNSTADQAAAQRSRDFHVGWFLHPIIYGEYPKSLQVIVKERLPKFTADEVHMVKGSIDYVGINQYTAYYVRDQQPNATTLPSYSSDWHAAPIYERDGVPIGPRANSDWLYIVPWGLYKAVTYVKEKYGNPTMFLSENGMDDPGNVTIAQGVHDTTRVAYYRSYITKLKEAIDDGANCIGYFAWSLLDNFEWKLGYTSRFGLVYVDFRTLRRYPKMSAYWFRDLVSSKN.

The signal sequence occupies residues 1–21 (MGHRLVVVLLLALLVAGAARA). Q68 lines the a beta-D-glucoside pocket. N96 carries an N-linked (GlcNAc...) asparagine glycan. A beta-D-glucoside-binding positions include H169 and 214–215 (NE). E215 serves as the catalytic Proton donor. Residues C234 and C237 are joined by a disulfide bond. N290 carries an N-linked (GlcNAc...) asparagine glycan. Y353 provides a ligand contact to a beta-D-glucoside. A glycan (N-linked (GlcNAc...) asparagine) is linked at N364. E424 serves as a coordination point for a beta-D-glucoside. Catalysis depends on E424, which acts as the Nucleophile. The N-linked (GlcNAc...) asparagine glycan is linked to N432. A beta-D-glucoside-binding positions include W471, 478–479 (EW), and F487.

The protein belongs to the glycosyl hydrolase 1 family.

The catalysed reaction is Hydrolysis of terminal, non-reducing beta-D-glucosyl residues with release of beta-D-glucose.. In Oryza sativa subsp. japonica (Rice), this protein is Beta-glucosidase 1 (BGLU1).